The chain runs to 79 residues: NADH-ubiquinone oxidoreductase chain 5 (79 aa).

The next 2 membrane-spanning stretches (helical) occupy residues 5–27 (TPIMMTTLISLTLPIFATLTNPY) and 40–57 (VMYAFITSLPSTTLFILS).

It belongs to the complex I subunit 5 family. As to quaternary structure, core subunit of respiratory chain NADH dehydrogenase (Complex I) which is composed of 45 different subunits.

The protein resides in the mitochondrion inner membrane. It carries out the reaction a ubiquinone + NADH + 5 H(+)(in) = a ubiquinol + NAD(+) + 4 H(+)(out). Core subunit of the mitochondrial membrane respiratory chain NADH dehydrogenase (Complex I) which catalyzes electron transfer from NADH through the respiratory chain, using ubiquinone as an electron acceptor. Essential for the catalytic activity and assembly of complex I. The polypeptide is NADH-ubiquinone oxidoreductase chain 5 (MT-ND5) (Macaca fascicularis (Crab-eating macaque)).